The primary structure comprises 1048 residues: MALYDEDLLKNPFYLALQKWRPDLCSKVAQIHGIVLVPCRGSLPGSVQASCQFESYVLVPTEGHFQTLDGKAVVIEGNRIKLGAGFACLLSVPILFEETFYNEKEESFSILCIAHPLERRETSEEPSAPADPFSLKTIEDVREFLGRHSEKFDKNIASFHRTFRECERKSLRHHIDSVNALYTKCLQQLLRDSHLKVLAKQEAQMNLMKQAVEMYVHHDIYDLIFKYVGTMEASEDAAFNKITRSLQDLQQKDIGVKPEFSFNIPRAKRELGQLNKCTSPQQKLLCLRKVVQLMTQSPSQRVNLETMCADDLLSVLLYLLVKTEIPNWMANLSYIKNFRFSSSAKDELGYCLTSVEAAIEYIRQGSLSTKTPDAEGFGDRLFLKQRMNLLSQMTSTPIDCLFKHIASGNQKEVERLLSQDDQDKDAMQKMCHPLCSCEDCEKLISGRLNDPSVVTPFSRDDRGQTPLHVAALCGQASLIDFLVSKGAVVNATDYHGSTPLHLACQKGFQSVTLLLLHYKASTEVQDNNGNTPLHLACTYGQEDCVKALVYYDVQACRLDIGNEKGDTALHIAARWGYEGIIETLLQNGAPTAVQNRLKETPLKCALNSKILSIMEAHHLSSDRRPRPSEVPAQSPTRSVDSISQGSSTSSFSSISVSFRQEEVKKDYREVEKLLRAVADGDLEMVRYLLEWTEDDLDDVEDAISTVDLEFCHPLCQCPKCAPAQKLARISANGLSVNVTNQDGFSPLHMAALHGRTDLVPLLLKHGAYSGARNTSQAVPLHLACQQGHFQVAKCLLDSNAKPNKKDLSGNTPLICACSAGHHEVAALLLQHGASINACNNKGNTALHEAVMGRHTLVVELLLFYGASVDILNKRQYTAADCAEQDSKIMELLQVVPGCVASLDSVEEADHEGYVTVEIRRKWNPKMYNLPEEPLRRQFCLINPGGRFQERTSRETMGRDRSVPDLAGRSLQEPEKQRVTGKQSDLSDLSRYQTSEEGNKGLPERPVSRQAAPGHRPMVRRHTVNDAAILQVPEVTVHLTTHEASVPQS.

Positions M1–P372 are sufficient for GEF activity towards RAB21. Residues A233–T371 enclose the VPS9 domain. ANK repeat units follow at residues T396–A426, R462–A491, H495–V524, N528–R557, K564–V593, and L597–P627. The sufficient for interaction with VPS29 stretch occupies residues T396–D460. The interaction with RAB38 stretch occupies residues P451 to T600. The interval P451–I729 is interaction with RAB32. Over residues H618–P627 the composition is skewed to basic and acidic residues. The interval H618–S650 is disordered. Residues S638–S650 are compositionally biased toward low complexity. Residues F658 to D707 form a required for interaction with VAMP7 region. ANK repeat units lie at residues R668 to D698, D742 to A771, S775 to K804, S808 to A837, and K841 to I870. Residues T692–S745 form a sufficient for interaction with VPS29 region. The segment covering E949 to V962 has biased composition (basic and acidic residues). Residues E949–R1019 are disordered. S961 and S969 each carry phosphoserine. Over residues T979 to E995 the composition is skewed to polar residues. The span at E996–V1006 shows a compositional bias: basic and acidic residues. T1022 carries the post-translational modification Phosphothreonine.

Interacts with RAB21 (GDP-bound form), VPS29, KIF5A, KIF5C, GOLGA4. Interacts with RAB32 (GTP-bound form), RAB38 (GTP-bound form), VAMP7. Interacts with low affinity with RAB5. ANKRD27:RAB32 heterodimers can homodimerize to form tetramers. Can interact with RAB38 or RAB32, VPS29 and VAMP7 simultaneously. A decreased interaction with RAB32 seen in the presence of SGSM2.

The protein resides in the early endosome. Its subcellular location is the late endosome. The protein localises to the cytoplasmic vesicle membrane. It localises to the lysosome. It is found in the cell membrane. The protein resides in the melanosome. Its subcellular location is the cytoplasmic vesicle. May be a guanine exchange factor (GEF) for Rab21, Rab32 and Rab38 and regulate endosome dynamics. May regulate the participation of VAMP7 in membrane fusion events; in vitro inhibits VAMP7-mediated SNARE complex formation by trapping VAMP7 in a closed, fusogenically inactive conformation. Involved in peripheral melanosomal distribution of TYRP1 in melanocytes; the function, which probably is implicating vesicle-trafficking, includes cooperation with Rab32, Rab38 and VAMP7. Involved in the regulation of neurite growth; the function seems to require its GEF activity, probably towards Rab21, and VAMP7 but not Rab32/38. Proposed to be involved in Golgi sorting of VAMP7 and transport of VAMP7 vesicles to the cell surface; the function seems to implicate kinesin heavy chain isoform 5 proteins, GOLGA4, RAB21 and MACF1. Required for the colocalization of VAMP7 and Rab21, probably on TGN sites. Involved in GLUT1 endosome-to-plasma membrane trafficking; the function is dependent of association with VPS29. Regulates the proper trafficking of melanogenic enzymes TYR, TYRP1 and DCT/TYRP2 to melanosomes in melanocytes. This Mus musculus (Mouse) protein is Ankyrin repeat domain-containing protein 27 (Ankrd27).